Here is a 441-residue protein sequence, read N- to C-terminus: ATP-dependent RNA helicase SUB2 (441 aa).

A compositionally biased stretch (acidic residues) spans 1–17 (MSHEGEEELLDYSDSEE). The interval 1–47 (MSHEGEEELLDYSDSEEIALPSTTVESGSNGDAKAETTTVKEENTEQ) is disordered. Residues 21–30 (PSTTVESGSN) are compositionally biased toward polar residues. Residues 33–46 (AKAETTTVKEENTE) are compositionally biased toward basic and acidic residues. Residues 57–85 (TGFRDFLLKPELLRAIVDCGFEHPSEVQQ) carry the Q motif motif. One can recognise a Helicase ATP-binding domain in the interval 88 to 263 (IPQSILGTDV…KKFMSSPLEI (176 aa)). 101–108 (AKAGVGKT) provides a ligand contact to ATP. The short motif at 210–213 (DECD) is the DECD box element. The Helicase C-terminal domain maps to 275-436 (GLQQYYVDVE…PYPAEGVDPS (162 aa)).

This sequence belongs to the DEAD box helicase family. DECD subfamily.

The protein localises to the nucleus. The catalysed reaction is ATP + H2O = ADP + phosphate + H(+). Functionally, ATP-binding RNA helicase involved in transcription elongation and required for the export of mRNA out of the nucleus. SUB2 also plays a role in pre-mRNA splicing and spliceosome assembly. May be involved in rDNA and telomeric silencing, and maintenance of genome integrity. This is ATP-dependent RNA helicase SUB2 (SUB2) from Yarrowia lipolytica (strain CLIB 122 / E 150) (Yeast).